The chain runs to 178 residues: Probable chorismate pyruvate-lyase (178 aa).

Substrate contacts are provided by Arg73, Leu111, and Glu163.

It belongs to the UbiC family.

The protein resides in the cytoplasm. The enzyme catalyses chorismate = 4-hydroxybenzoate + pyruvate. It participates in cofactor biosynthesis; ubiquinone biosynthesis. Functionally, removes the pyruvyl group from chorismate, with concomitant aromatization of the ring, to provide 4-hydroxybenzoate (4HB) for the ubiquinone pathway. The sequence is that of Probable chorismate pyruvate-lyase from Pseudomonas aeruginosa (strain ATCC 15692 / DSM 22644 / CIP 104116 / JCM 14847 / LMG 12228 / 1C / PRS 101 / PAO1).